The following is a 440-amino-acid chain: MQAYFDQLDRVRYEGSKSSNPLAFRHYNPDELVLGKRMEEHLRFAACYWHTFCWNGADMFGVGAFNRPWQQPGEALALAKRKADVAFEFFHKLHVPFYCFHDVDVSPEGASLKEYINNFAQMVDVLAGKQEESGVKLLWGTANCFTNPRYGAGAATNPDPEVFSWAATQVVTAMEATHKLGGENYVLWGGREGYETLLNTDLRQEREQLGRFMQMVVEHKHKIGFQGTLLIEPKPQEPTKHQYDYDAATVYGFLKQFGLEKEIKLNIEANHATLAGHSFHHEIATAIALGLFGSVDANRGDAQLGWDTDQFPNSVEENALVMYEILKAGGFTTGGLNFDAKVRRQSTDKYDLFYGHIGAMDTMALALKIAACMIEDGELDKRIAQRYSGWNSELGQQILKGQMSLADLAKYAQEHNLSPVHQSGRQEQLENLVNHYLFDK.

Residues H101 and D104 contribute to the active site. 7 residues coordinate Mg(2+): E232, E268, H271, D296, D307, D309, and D339.

It belongs to the xylose isomerase family. As to quaternary structure, homotetramer. Mg(2+) is required as a cofactor.

It localises to the cytoplasm. The catalysed reaction is alpha-D-xylose = alpha-D-xylulofuranose. The chain is Xylose isomerase from Escherichia coli O157:H7.